A 308-amino-acid chain; its full sequence is uncharacterized protein (308 aa).

This is an uncharacterized protein from Bacillus subtilis (strain 168).